The chain runs to 418 residues: Probable carboxypeptidase AO090166000075 (418 aa).

The N-terminal stretch at 1-18 (MKATDLFHVTALVAGALA) is a signal peptide. Asn-74 carries N-linked (GlcNAc...) asparagine glycosylation. Residue Asp-147 coordinates Zn(2+). Asn-168 is a glycosylation site (N-linked (GlcNAc...) asparagine). Glu-179 serves as the catalytic Proton acceptor. Glu-180 lines the Zn(2+) pocket.

This sequence belongs to the peptidase M20A family. Zn(2+) is required as a cofactor.

It is found in the secreted. This is Probable carboxypeptidase AO090166000075 from Aspergillus oryzae (strain ATCC 42149 / RIB 40) (Yellow koji mold).